A 292-amino-acid polypeptide reads, in one-letter code: Diaminopimelate epimerase (292 aa).

Residues N13, Q46, and N66 each contribute to the substrate site. The Proton donor role is filled by C75. Substrate is bound by residues 76 to 77 (GN), N166, N199, and 217 to 218 (ER). Residue C226 is the Proton acceptor of the active site. 227 to 228 (GT) contacts substrate.

It belongs to the diaminopimelate epimerase family. In terms of assembly, homodimer.

It localises to the cytoplasm. The enzyme catalyses (2S,6S)-2,6-diaminopimelate = meso-2,6-diaminopimelate. It participates in amino-acid biosynthesis; L-lysine biosynthesis via DAP pathway; DL-2,6-diaminopimelate from LL-2,6-diaminopimelate: step 1/1. Its function is as follows. Catalyzes the stereoinversion of LL-2,6-diaminopimelate (L,L-DAP) to meso-diaminopimelate (meso-DAP), a precursor of L-lysine and an essential component of the bacterial peptidoglycan. In Ralstonia pickettii (strain 12J), this protein is Diaminopimelate epimerase.